Here is a 207-residue protein sequence, read N- to C-terminus: 3-isopropylmalate dehydratase small subunit (207 aa).

Belongs to the LeuD family. LeuD type 1 subfamily. In terms of assembly, heterodimer of LeuC and LeuD.

The catalysed reaction is (2R,3S)-3-isopropylmalate = (2S)-2-isopropylmalate. It functions in the pathway amino-acid biosynthesis; L-leucine biosynthesis; L-leucine from 3-methyl-2-oxobutanoate: step 2/4. Catalyzes the isomerization between 2-isopropylmalate and 3-isopropylmalate, via the formation of 2-isopropylmaleate. In Acidithiobacillus ferrooxidans (strain ATCC 23270 / DSM 14882 / CIP 104768 / NCIMB 8455) (Ferrobacillus ferrooxidans (strain ATCC 23270)), this protein is 3-isopropylmalate dehydratase small subunit.